We begin with the raw amino-acid sequence, 205 residues long: Outer-membrane lipoprotein carrier protein (205 aa).

The N-terminal stretch at 1 to 22 (MKKTTLKFAALTLLGLSNLALA) is a signal peptide.

Belongs to the LolA family. In terms of assembly, monomer.

It localises to the periplasm. In terms of biological role, participates in the translocation of lipoproteins from the inner membrane to the outer membrane. Only forms a complex with a lipoprotein if the residue after the N-terminal Cys is not an aspartate (The Asp acts as a targeting signal to indicate that the lipoprotein should stay in the inner membrane). This is Outer-membrane lipoprotein carrier protein from Haemophilus influenzae (strain PittEE).